The following is a 627-amino-acid chain: 5-aminolevulinate synthase, non-specific, mitochondrial (627 aa).

Residues 1–58 (MDVIVRRCPFLARVPQAFFQQSKKSLAVYAQRCPFMMELASKPMAPSLARALCSSSSS) constitute a mitochondrion transit peptide. Residues arginine 204, serine 321, and lysine 340 each contribute to the substrate site. Pyridoxal 5'-phosphate-binding residues include serine 373, histidine 401, and threonine 429. The active site involves lysine 432. The residue at position 432 (lysine 432) is an N6-(pyridoxal phosphate)lysine. 2 residues coordinate pyridoxal 5'-phosphate: threonine 461 and threonine 462. Position 549 (threonine 549) interacts with substrate.

This sequence belongs to the class-II pyridoxal-phosphate-dependent aminotransferase family. Homodimer. It depends on pyridoxal 5'-phosphate as a cofactor.

The protein localises to the mitochondrion inner membrane. The enzyme catalyses succinyl-CoA + glycine + H(+) = 5-aminolevulinate + CO2 + CoA. Its pathway is porphyrin-containing compound metabolism; protoporphyrin-IX biosynthesis; 5-aminolevulinate from glycine: step 1/1. Catalyzes the pyridoxal 5'-phosphate (PLP)-dependent condensation of succinyl-CoA and glycine to form aminolevulinic acid (ALA), with CoA and CO2 as by-products. This is 5-aminolevulinate synthase, non-specific, mitochondrial (alas1) from Opsanus tau (Oyster toadfish).